The sequence spans 134 residues: Glycine cleavage system H protein (134 aa).

The Lipoyl-binding domain maps to 24–106; the sequence is TVRVGITDYA…YGAGWLLDIQ (83 aa). K65 carries the N6-lipoyllysine modification.

It belongs to the GcvH family. As to quaternary structure, the glycine cleavage system is composed of four proteins: P, T, L and H. (R)-lipoate serves as cofactor.

Functionally, the glycine cleavage system catalyzes the degradation of glycine. The H protein shuttles the methylamine group of glycine from the P protein to the T protein. The protein is Glycine cleavage system H protein of Mycobacterium bovis (strain ATCC BAA-935 / AF2122/97).